Consider the following 670-residue polypeptide: Tripeptidyl-peptidase SED1 (670 aa).

Residues 1–20 (MSTMIFMYFIYIVLYASGIA) form the signal peptide. A propeptide spans 21–231 (ANLSYHVHEK…VGLLKNKILS (211 aa)) (removed in mature form). One can recognise a Peptidase S53 domain in the interval 241 to 669 (LITPDCLRAL…DRMLDLFLQL (429 aa)). Catalysis depends on charge relay system residues Glu-318 and Asp-322. Residues Asn-334, Asn-387, Asn-488, Asn-508, and Asn-551 are each glycosylated (N-linked (GlcNAc...) asparagine). Ser-586 (charge relay system) is an active-site residue. Asp-627, Val-628, Gly-647, and Asp-649 together coordinate Ca(2+).

Requires Ca(2+) as cofactor.

It is found in the secreted. The protein resides in the extracellular space. It carries out the reaction Release of an N-terminal tripeptide from a polypeptide.. Its function is as follows. Secreted tripeptidyl-peptidase which degrades proteins at acidic pHs and is involved in virulence. This chain is Tripeptidyl-peptidase SED1 (SED1), found in Arthroderma otae (strain ATCC MYA-4605 / CBS 113480) (Microsporum canis).